A 378-amino-acid chain; its full sequence is Probable protein phosphatase 2C 55 (378 aa).

2 disordered regions span residues M1–G59 and E79–C115. Residues L7–G26 show a composition bias toward low complexity. Basic residues predominate over residues G92 to P104. Residues S122–F369 enclose the PPM-type phosphatase domain. Residues D158, G159, D321, and D360 each coordinate Mn(2+).

The protein belongs to the PP2C family. It depends on Mg(2+) as a cofactor. The cofactor is Mn(2+).

The catalysed reaction is O-phospho-L-seryl-[protein] + H2O = L-seryl-[protein] + phosphate. The enzyme catalyses O-phospho-L-threonyl-[protein] + H2O = L-threonyl-[protein] + phosphate. The polypeptide is Probable protein phosphatase 2C 55 (Oryza sativa subsp. japonica (Rice)).